We begin with the raw amino-acid sequence, 139 residues long: Probable cytochrome b5 (139 aa).

The Cytochrome b5 heme-binding domain occupies 2–78 (SAEFTYQDVA…LEPLLVGTLK (77 aa)). Histidine 37 and histidine 61 together coordinate heme. A helical transmembrane segment spans residues 105–125 (GLGIGLYAVLVLGGLAGFAAY).

It belongs to the cytochrome b5 family.

The protein localises to the endoplasmic reticulum membrane. It localises to the microsome membrane. Functionally, membrane bound hemoprotein which function as an electron carrier for several membrane bound oxygenases. This Neurospora crassa (strain ATCC 24698 / 74-OR23-1A / CBS 708.71 / DSM 1257 / FGSC 987) protein is Probable cytochrome b5.